Reading from the N-terminus, the 258-residue chain is MLEKIDGIIIKTKDYGETHKLVTIFSNKIGKFNALAKGAKKPKSRMAAVTQPFINARFFVYIGSGLSTIQQGEVLDSFRIIREDIFKTAYVSYMAELTDKLLDAKENDPFLYEQFYQTLLWINNQDEVDIPVIMYELKLYKKAGFAPVLHQCSRCGNQEGLSKFSIREGGMLCQQCAYFDPEAIHISEKLSRLLYLFSEVDLKRIGNIRMKKENVQLIRKILYEYYDQYGGFWIKSRKVLDQLDFFIPNVKNGNSYNE.

Belongs to the RecO family.

Its function is as follows. Involved in DNA repair and RecF pathway recombination. The protein is DNA repair protein RecO of Oceanobacillus iheyensis (strain DSM 14371 / CIP 107618 / JCM 11309 / KCTC 3954 / HTE831).